Consider the following 626-residue polypeptide: Nuclear RNA export factor 1 (626 aa).

The span at 1–16 (MADEGKSYSEHDDERV) shows a compositional bias: basic and acidic residues. Residues 1-85 (MADEGKSYSE…TTRPNRRGDA (85 aa)) are disordered. N-acetylalanine is present on Ala-2. The segment at 2–60 (ADEGKSYSEHDDERVNFPQRKKKGRGPFRWKYGEGNRRSGRGGSGIRSSRLEEDDGDVA) is minor non-specific RNA-binding. Residues 2 to 118 (ADEGKSYSEH…GTSQDGTSKN (117 aa)) are RNA-binding (RBD). Residues 2–198 (ADEGKSYSEH…IIINPSAPPH (197 aa)) form an interaction with ALYREF/THOC4 and LUZP4 region. Phosphoserine is present on Ser-9. Residues 20–29 (QRKKKGRGPF) show a composition bias toward basic residues. Arg-42 carries the post-translational modification Asymmetric dimethylarginine; alternate. Residue Arg-42 is modified to Omega-N-methylarginine; alternate. The tract at residues 61–118 (MSDAQDGPRVRYNPYTTRPNRRGDAWHDRDRIHVTVRRDRAPPERGGAGTSQDGTSKN) is major non-specific RNA-binding. Positions 61–118 (MSDAQDGPRVRYNPYTTRPNRRGDAWHDRDRIHVTVRRDRAPPERGGAGTSQDGTSKN) are RNA binding. A Nuclear localization signal motif is present at residues 67–100 (GPRVRYNPYTTRPNRRGDAWHDRDRIHVTVRRDR). The short motif at 83-110 (GDAWHDRDRIHVTVRRDRAPPERGGAGT) is the Nuclear export signal element. The 80-residue stretch at 119–198 (WFKITIPYGR…IIINPSAPPH (80 aa)) folds into the RRM domain. Tyr-126 is modified (3'-nitrotyrosine). 4 LRR repeats span residues 266-291 (ELLSLNLSHNRLYRLDDMSSIVQKVP), 292-315 (NLKILNLSGNELKSERELDKIKGL), 316-350 (KLEELWLDGNSLCDTFRDQSTYIRSVVACVSAIRE), and 351-378 (RFPKLLRLDGHELPPPIAFDVEAPTTLP). Residues 393–543 (LVLHFLQQYY…LCIVNDELFV (151 aa)) enclose the NTF2 domain. The 55-residue stretch at 572–626 (PEQQEMLQAFSTQSGMNLEWSQKCLQDNNWDYTRSAQAFTHLKAKGEIPEVAFMK) folds into the TAP-C domain.

Belongs to the NXF family. As to quaternary structure, heterodimer (via NTF2 domain) with NXT1. The formation of NXF1-NXT1 heterodimers is required for the NXF1-mediated nuclear mRNA export. Forms a complex with RANBP2/NUP358, NXT1 and RANGAP1. Associates with the exon junction complex (EJC) and with the transcription/export (TREX) complex. Found in a mRNA complex with UPF3A and UPF3B. Found in a post-splicing complex with RBM8A, UPF1, UPF2, UPF3A, UPF3B and RNPS1. Interacts (via N-terminus) with DHX9 (via N-terminus); this interaction is direct and negatively regulates NXF1-mediated nuclear export of constitutive transport element (CTE)-containing cellular mRNAs. Interacts with ALYREF/THOC4. Interacts with FYTTD1/UIF. Interacts with EIF4A3. Interacts with NUPL2. Interacts with THOC5. Interacts with CHTOP. Interacts with FRG1 (via N-terminus). Interacts with LUZP4. Interacts with FMR1; the interaction occurs in a mRNA-dependent and polyribosomes-independent manner in the nucleus. Interacts with CPSF6 (via N-terminus); this interaction is direct. Interacts with RBM15. Interacts with RBM15B. Interacts with MCM3AP; this interaction is not mediated by RNA.

It is found in the nucleus. Its subcellular location is the nucleoplasm. It localises to the nucleus speckle. The protein resides in the cytoplasm. In terms of biological role, involved in the nuclear export of mRNA species bearing retroviral constitutive transport elements (CTE) and in the export of mRNA from the nucleus to the cytoplasm (TAP/NFX1 pathway). The NXF1-NXT1 heterodimer is involved in the export of HSP70 mRNA in conjunction with ALYREF/THOC4 and THOC5 components of the TREX complex. ALYREF/THOC4-bound mRNA is thought to be transferred to the NXF1-NXT1 heterodimer for export. Also involved in nuclear export of m6A-containing mRNAs: interaction between SRSF3 and YTHDC1 facilitates m6A-containing mRNA-binding to both SRSF3 and NXF1, promoting mRNA nuclear export. This Pongo abelii (Sumatran orangutan) protein is Nuclear RNA export factor 1 (NXF1).